The following is a 1577-amino-acid chain: Dynamin-binding protein (1577 aa).

Methionine 1 is modified (N-acetylmethionine). 4 consecutive SH3 domains span residues 2-61 (EAGS…IVTI), 66-126 (EGER…ELCL), 145-204 (YSMG…LLGP), and 243-302 (EPGT…LCPD). Disordered regions lie at residues 211-244 (SVSS…EEEP) and 335-395 (EEQR…WEMP). Acidic residues predominate over residues 230–244 (VGEEEIGPDEDEEEP). Over residues 335-344 (EEQRHETSDH) the composition is skewed to basic and acidic residues. Residue serine 496 is modified to Phosphoserine. Disordered stretches follow at residues 591–624 (GSSK…TSPH) and 639–659 (VRPS…NAVS). Positions 639 to 649 (VRPSRPAPLPP) are enriched in pro residues. Serine 684 carries the phosphoserine modification. A coiled-coil region spans residues 693–757 (LVLVRIEEME…ELQQLREMTL (65 aa)). Positions 784-967 (KRAKVIEELL…KEINVNINEY (184 aa)) constitute a DH domain. The 210-residue stretch at 1008–1217 (LKHLTGFAPQ…LKVAGREGNL (210 aa)) folds into the BAR domain. A coiled-coil region spans residues 1136–1173 (ERAEKLKDKKTLEELQSARNNYEALNAQLLDELPKFHQ). One can recognise an SH3 5 domain in the interval 1285–1348 (PPEKLFQAER…YSSFLKPYNP (64 aa)). The segment at 1348-1487 (PRRSHSDASV…SVPGRNGQSQ (140 aa)) is disordered. The span at 1376 to 1405 (RQNSGSTLTFNPSSMAVSFTSGSCQKQPQD) shows a compositional bias: polar residues. Over residues 1419-1442 (SASLNPSNSESSPSRCPSDPDSTS) the composition is skewed to low complexity. The region spanning 1513-1576 (EGNQVYFAVY…PSNYIRKTEY (64 aa)) is the SH3 6 domain.

As to quaternary structure, binds DNM1 via its N-terminal SH3 domains. The C-terminal SH3 domain binds a complex containing actin, tubulin, Hsp70 and actin-regulatory proteins, such as ENAH, EVL, WIRE, CR16, WAVE1 and NAP1L1. Interacts with FASLG. Interacts (via SH3 domain 6) with WASL. Interacts (via SH3 domain 6) interacts with ENAH. Interacts (via C-terminal domain) with TJP1; required for the apical cell-cell junction localization of DNMBP. (Microbial infection) Interacts (via SH3 domain 6) with L.monocytogenes InlC. In terms of tissue distribution, detected in heart, brain, lung, liver, skeletal muscle, kidney and pancreas.

Its subcellular location is the cytoplasm. The protein resides in the golgi apparatus. The protein localises to the golgi stack. It localises to the cytoskeleton. It is found in the synapse. Its subcellular location is the cell junction. Functionally, plays a critical role as a guanine nucleotide exchange factor (GEF) for CDC42 in several intracellular processes associated with the actin and microtubule cytoskeleton. Regulates the structure of apical junctions through F-actin organization in epithelial cells. Participates in the normal lumenogenesis of epithelial cell cysts by regulating spindle orientation. Plays a role in ciliogenesis. May play a role in membrane trafficking between the cell surface and the Golgi. The protein is Dynamin-binding protein of Homo sapiens (Human).